A 359-amino-acid polypeptide reads, in one-letter code: Probable dual-specificity RNA methyltransferase RlmN (359 aa).

Residue Glu93 is the Proton acceptor of the active site. A Radical SAM core domain is found at 107–337 (KSERVTLCVS…VTMRYEKGHD (231 aa)). Cys114 and Cys342 form a disulfide bridge. [4Fe-4S] cluster is bound by residues Cys121, Cys125, and Cys128. S-adenosyl-L-methionine contacts are provided by residues 168–169 (GE), Ser200, 223–225 (SLH), and Asn299. Residue Cys342 is the S-methylcysteine intermediate of the active site.

This sequence belongs to the radical SAM superfamily. RlmN family. It depends on [4Fe-4S] cluster as a cofactor.

It localises to the cytoplasm. It carries out the reaction adenosine(2503) in 23S rRNA + 2 reduced [2Fe-2S]-[ferredoxin] + 2 S-adenosyl-L-methionine = 2-methyladenosine(2503) in 23S rRNA + 5'-deoxyadenosine + L-methionine + 2 oxidized [2Fe-2S]-[ferredoxin] + S-adenosyl-L-homocysteine. It catalyses the reaction adenosine(37) in tRNA + 2 reduced [2Fe-2S]-[ferredoxin] + 2 S-adenosyl-L-methionine = 2-methyladenosine(37) in tRNA + 5'-deoxyadenosine + L-methionine + 2 oxidized [2Fe-2S]-[ferredoxin] + S-adenosyl-L-homocysteine. Functionally, specifically methylates position 2 of adenine 2503 in 23S rRNA and position 2 of adenine 37 in tRNAs. This is Probable dual-specificity RNA methyltransferase RlmN from Akkermansia muciniphila (strain ATCC BAA-835 / DSM 22959 / JCM 33894 / BCRC 81048 / CCUG 64013 / CIP 107961 / Muc).